We begin with the raw amino-acid sequence, 728 residues long: Catalase-peroxidase 1 (728 aa).

The segment at residues 91–218 (WHSAGTYRTA…LAAVQMGLIY (128 aa)) is a cross-link (tryptophyl-tyrosyl-methioninium (Trp-Tyr) (with M-244)). His-92 serves as the catalytic Proton acceptor. The segment at residues 218–244 (YVNPEGPDGNPDPVAAARDIRDTFARM) is a cross-link (tryptophyl-tyrosyl-methioninium (Tyr-Met) (with W-91)). Residue His-259 participates in heme b binding.

This sequence belongs to the peroxidase family. Peroxidase/catalase subfamily. As to quaternary structure, homodimer or homotetramer. It depends on heme b as a cofactor. Formation of the three residue Trp-Tyr-Met cross-link is important for the catalase, but not the peroxidase activity of the enzyme.

It carries out the reaction H2O2 + AH2 = A + 2 H2O. The enzyme catalyses 2 H2O2 = O2 + 2 H2O. Bifunctional enzyme with both catalase and broad-spectrum peroxidase activity. The chain is Catalase-peroxidase 1 from Burkholderia ambifaria (strain MC40-6).